A 993-amino-acid chain; its full sequence is Glycogen phosphorylase 2 (993 aa).

The disordered stretch occupies residues 1 to 82; that stretch reads MEEKRSTNSP…SNQSEDPATQ (82 aa). Over residues 19-48 the composition is skewed to polar residues; the sequence is RSGSITSATSHPPRSNSNPKLVAKHQQQLY. Low complexity predominate over residues 58 to 77; that stretch reads EQQNQQPQQQQQKQTSNQSE. Lys763 carries the N6-(pyridoxal phosphate)lysine modification. Polar residues predominate over residues 962 to 981; the sequence is VISGGDKTNNTLKPKQTTKG. Positions 962–993 are disordered; the sequence is VISGGDKTNNTLKPKQTTKGFNIGGQPGNPTN. Residues 983–993 show a composition bias toward gly residues; the sequence is NIGGQPGNPTN.

Belongs to the glycogen phosphorylase family. As to quaternary structure, homodimer. Requires pyridoxal 5'-phosphate as cofactor. Post-translationally, the N-terminus is blocked. Enzyme activity requires processing of the 113 kDa peptide to an enzymatically active 106 kDa form of the protein. Processing would occur near the middle of the Gln-rich repetitive element.

The catalysed reaction is [(1-&gt;4)-alpha-D-glucosyl](n) + phosphate = [(1-&gt;4)-alpha-D-glucosyl](n-1) + alpha-D-glucose 1-phosphate. Phosphorylase is an important allosteric enzyme in carbohydrate metabolism. Enzymes from different sources differ in their regulatory mechanisms and in their natural substrates. However, all known phosphorylases share catalytic and structural properties. This is Glycogen phosphorylase 2 (glpD) from Dictyostelium discoideum (Social amoeba).